Here is a 164-residue protein sequence, read N- to C-terminus: uncharacterized protein (164 aa).

2 consecutive CBS domains span residues 9–66 and 72–128; these read ATTK…DIDS and MTKD…VHTM.

This is an uncharacterized protein from Acidianus ambivalens (Desulfurolobus ambivalens).